The following is an 853-amino-acid chain: MSTIENFDAHTPMMQQYLKLKAQHPEILLFYRMGDFYELFYDDAKRASQLLDISLTKRGASAGEPIPMAGIPYHAVENYLAKLVNQGESVAICEQIGDPATSKGPVERKVVRIVTPGTISDEALLQERQDNLLAAIWQDSKGFGYATLDISSGRFRLSEPADRETMVAELQRTNPAELLYAEDFAEMSLIEGRRGLRRRPLWEFEIDTARQQLNLQFGTRDLVGFGVENAPRGLCAAGCLLQYAKDTQRTTLPHIRSITMERQQDSIIMDAATRRNLEITQNLAGGAENTLASVLDCTVTPMGSRMLKRWLHMPVRDTRVLLERQQTIGALQDFTAELQPVLRQVGDLERILARLALRTARPRDLARMRHAFQQLPELRAQLENVDSAPVQALREKMGEFAELRDLLERAIIDTPPVLVRDGGVIASGYNEELDEWRALADGATDYLERLEVRERERTGLDTLKVGFNAVHGYYIQISRGQSHLAPINYMRRQTLKNAERYIIPELKEYEDKVLTSKGKALALEKQLYEELFDLLLPHLEALQQSASALAELDVLVNLAERAYTLNYTCPTFIDKPGIRITEGRHPVVEQVLNEPFIANPLNLSPQRRMLIITGPNMGGKSTYMRQTALIALMAYIGSYVPAQKVEIGPIDRIFTRVGAADDLASGRSTFMVEMTETANILHNATEYSLVLMDEIGRGTSTYDGLSLAWACAENLANKIKALTLFATHYFELTQLPEKMEGVANVHLDALEHGDTIAFMHSVQDGAASKSYGLAVAALAGVPKEVIKRARQKLRELESISPNAAATQVDGTQMSLLSVPEETSPAVEALENLDPDSLTPRQALEWIYRLKSLV.

614-621 (GPNMGGKS) contacts ATP.

The protein belongs to the DNA mismatch repair MutS family.

In terms of biological role, this protein is involved in the repair of mismatches in DNA. It is possible that it carries out the mismatch recognition step. This protein has a weak ATPase activity. The sequence is that of DNA mismatch repair protein MutS from Escherichia coli O81 (strain ED1a).